We begin with the raw amino-acid sequence, 403 residues long: Tryptophan 2,3-dioxygenase (403 aa).

Position 69 to 73 (69 to 73) interacts with substrate; sequence FIVIH. The PLD motif; required for enzymatic activity motif lies at 133-135; sequence PLD. A substrate-binding site is contributed by arginine 140. Histidine 327 provides a ligand contact to heme. A substrate-binding site is contributed by threonine 341.

This sequence belongs to the tryptophan 2,3-dioxygenase family. In terms of assembly, homotetramer. Dimer of dimers. Requires heme as cofactor. As to expression, expressed in body wall muscle cells, hypodermis, PLM neurons and touch-receptor neurons.

It carries out the reaction L-tryptophan + O2 = N-formyl-L-kynurenine. The protein operates within amino-acid degradation; L-tryptophan degradation via kynurenine pathway; L-kynurenine from L-tryptophan: step 1/2. Functionally, heme-dependent dioxygenase that catalyzes the oxidative cleavage of the L-tryptophan (L-Trp) pyrrole ring and converts L-tryptophan to N-formyl-L-kynurenine. Catalyzes the oxidative cleavage of the indole moiety. Involved in regulation of protein homeostasis, longevity and reproducive life span. Specifically regulates proteotoxicity due to age-related aggregation of proteins like alpha-synuclein, via its effects on tryptophan metabolism. This Caenorhabditis elegans protein is Tryptophan 2,3-dioxygenase.